A 1388-amino-acid polypeptide reads, in one-letter code: Dicer-like protein 2 (1388 aa).

The Helicase ATP-binding domain maps to 23–203 (MLEASMKENI…LLMVESNLDA (181 aa)). Position 36–43 (36–43 (MDTGSGKT)) interacts with ATP. The DEAH box motif lies at 144-147 (DEAH). The Helicase C-terminal domain occupies 368 to 537 (KFESLLNFLD…DDERQLQSVS (170 aa)). Residues 564 to 658 (AMAHLHHFCA…LPLTKKPELK (95 aa)) enclose the Dicer dsRNA-binding fold domain. RNase III domains lie at 906-1059 (ISAI…VDGG) and 1098-1281 (NDRL…VDSG). Residues Glu1137, Asp1267, and Glu1270 each coordinate Mg(2+).

The protein belongs to the helicase family. Dicer subfamily. The cofactor is Mg(2+). Mn(2+) is required as a cofactor.

Its function is as follows. Dicer-like endonuclease involved in cleaving double-stranded RNA in the RNA interference (RNAi) pathway. Produces 21 to 25 bp dsRNAs (siRNAs) which target the selective destruction of homologous RNAs leading to sequence-specific suppression of gene expression, called post-transcriptional gene silencing (PTGS). Part of a broad host defense response against viral infection and transposons. The sequence is that of Dicer-like protein 2 (dcl2) from Aspergillus fumigatus (strain ATCC MYA-4609 / CBS 101355 / FGSC A1100 / Af293) (Neosartorya fumigata).